The primary structure comprises 714 residues: DNA ligase (714 aa).

Residues 48 to 52, 97 to 98, and E129 contribute to the NAD(+) site; these read DADYD and SL. K131 acts as the N6-AMP-lysine intermediate in catalysis. Residues R152, E189, K307, and K331 each coordinate NAD(+). Zn(2+)-binding residues include C436, C439, C454, and C460. The BRCT domain occupies 637–714; sequence KQDTAVAGKT…TEDEWLALIG (78 aa).

Belongs to the NAD-dependent DNA ligase family. LigA subfamily. Requires Mg(2+) as cofactor. It depends on Mn(2+) as a cofactor.

It carries out the reaction NAD(+) + (deoxyribonucleotide)n-3'-hydroxyl + 5'-phospho-(deoxyribonucleotide)m = (deoxyribonucleotide)n+m + AMP + beta-nicotinamide D-nucleotide.. In terms of biological role, DNA ligase that catalyzes the formation of phosphodiester linkages between 5'-phosphoryl and 3'-hydroxyl groups in double-stranded DNA using NAD as a coenzyme and as the energy source for the reaction. It is essential for DNA replication and repair of damaged DNA. This Rhodopseudomonas palustris (strain BisB5) protein is DNA ligase.